Reading from the N-terminus, the 160-residue chain is 6,7-dimethyl-8-ribityllumazine synthase (160 aa).

5-amino-6-(D-ribitylamino)uracil-binding positions include Phe-23, 61–63 (SFE), and 85–87 (AVI). 90-91 (DT) is a binding site for (2S)-2-hydroxy-3-oxobutyl phosphate. The active-site Proton donor is His-93. Residue Phe-118 coordinates 5-amino-6-(D-ribitylamino)uracil. Position 132 (Arg-132) interacts with (2S)-2-hydroxy-3-oxobutyl phosphate.

The protein belongs to the DMRL synthase family.

The catalysed reaction is (2S)-2-hydroxy-3-oxobutyl phosphate + 5-amino-6-(D-ribitylamino)uracil = 6,7-dimethyl-8-(1-D-ribityl)lumazine + phosphate + 2 H2O + H(+). Its pathway is cofactor biosynthesis; riboflavin biosynthesis; riboflavin from 2-hydroxy-3-oxobutyl phosphate and 5-amino-6-(D-ribitylamino)uracil: step 1/2. Its function is as follows. Catalyzes the formation of 6,7-dimethyl-8-ribityllumazine by condensation of 5-amino-6-(D-ribitylamino)uracil with 3,4-dihydroxy-2-butanone 4-phosphate. This is the penultimate step in the biosynthesis of riboflavin. In Synechococcus sp. (strain CC9311), this protein is 6,7-dimethyl-8-ribityllumazine synthase.